We begin with the raw amino-acid sequence, 312 residues long: Olfactory receptor 6Z7 (312 aa).

Topologically, residues 1–29 (MERSLALANMTRVQQFILLGLSTRLDIRD) are extracellular. An N-linked (GlcNAc...) asparagine glycan is attached at Asn9. The chain crosses the membrane as a helical span at residues 30–50 (ALFAVFLTLYLLTLLENTLII). Topologically, residues 51-69 (YLICSHKELHKPMYFFLGN) are cytoplasmic. A helical membrane pass occupies residues 70 to 90 (LSCLEMCYVSVTMPTLLMGLW). Residue Asn91 is a topological domain, extracellular. The chain crosses the membrane as a helical span at residues 92 to 112 (GLYHIPFIACMTQLFFFIVLV). A disulfide bridge links Cys101 with Cys193. Over 113 to 141 (GTECILLASMAYDRYVAICRPLHYPVLMR) the chain is Cytoplasmic. A helical membrane pass occupies residues 142 to 162 (PQVCLGLAMISWLGGLLVSMI). The Extracellular portion of the chain corresponds to 163 to 195 (KTTCIATLSYCGPNVLNHFFCDVSPLLNLSCTH). N-linked (GlcNAc...) asparagine glycosylation is present at Asn190. Residues 196–216 (VALTELVDFISAIVILWGCFL) form a helical membrane-spanning segment. Residues 217–241 (TTMASYVAIGRAVLRMPSTTARYKA) lie on the Cytoplasmic side of the membrane. A helical membrane pass occupies residues 242 to 262 (FSTCASHLVVVGIFYSVTIFI). The Extracellular portion of the chain corresponds to 263–275 (YARPKRIEAMDLN). A helical transmembrane segment spans residues 276-296 (KVLSVIYTVVTPMCNPVIYCL). At 297-312 (RNKEVQVALHRTMHWS) the chain is on the cytoplasmic side.

It belongs to the G-protein coupled receptor 1 family.

It localises to the cell membrane. Odorant receptor. In Mus musculus (Mouse), this protein is Olfactory receptor 6Z7.